The primary structure comprises 609 residues: MGCLRSLVRRKQFDSSNGKAETHHHHQQLAKALTFPHLIAIGVGSTIGAGVYILVGTVAREHSGPALALSFLIAGISAALSAFCYAELSSRFPSAGSAYHYSYICIGEGVAWLIGWALILEYTIGGSTVARGISPNLAMIFGGEDCLPTILARHQIPGLDIVVDPCAAVLVFIVTGLCCLGVKESTFAQGIVTTANVFVMIFVIVAGSYLCFKTGWVGYELPTGYFPYGVDGMLTGSATVFFAYIGFDTVASMAEEVKNPRRDLPLGIGISLLLCCLLYMMVSVVIVGLVPYYAMDPDTPISSAFSSHGIQWAAYLINLGAVMALCSALMGSILPQPRILMAMARDGLLPSYFSYVNQRTQVPINGTITTGVCAAILAFFMDVSQLAGMVSVGTLVAFTMVAISLLIVRYVVPPDEVPLPSSLQENSSSHVGTSIRSKQPLLGKVDDSVVDKENAPGSWVLNKKNRRKFAGWSIMFTCIGNFLLSYAASSFLLPGLLRYSLCGVGGLFLLVGLIVLICIDQDDARHSFGHSGGFICPFVPLLPIVCILINMYLLVNLGAATWVRVSVWLFLGVVVYIFYGRRNSSLVNAVYVSTAHLQEIRRTSGHSLA.

A mitochondrion-targeting transit peptide spans 1–14 (MGCLRSLVRRKQFD). 14 consecutive transmembrane segments (helical) span residues 38-58 (LIAI…VGTV), 66-86 (ALAL…FCYA), 104-124 (ICIG…EYTI), 161-181 (IVVD…CCLG), 190-210 (GIVT…GSYL), 226-246 (FPYG…AYIG), 270-290 (ISLL…VGLV), 314-334 (AYLI…GSIL), 361-381 (QVPI…AFFM), 388-408 (GMVS…LLIV), 474-494 (IMFT…FLLP), 499-519 (YSLC…LICI), 534-554 (FICP…MYLL), and 558-578 (GAAT…VYIF).

Belongs to the amino acid-polyamine-organocation (APC) superfamily. Cationic amino acid transporter (CAT) (TC 2.A.3.3) family. Expressed in roots, stems, flowers, and leaves.

It localises to the mitochondrion membrane. Functionally, permease involved in the transport of the cationic neutral or acidic amino acids. The protein is Cationic amino acid transporter 3, mitochondrial (CAT3) of Arabidopsis thaliana (Mouse-ear cress).